The following is a 123-amino-acid chain: Large ribosomal subunit protein uL18 (123 aa).

The protein belongs to the universal ribosomal protein uL18 family. Part of the 50S ribosomal subunit; part of the 5S rRNA/L5/L18/L25 subcomplex. Contacts the 5S and 23S rRNAs.

Functionally, this is one of the proteins that bind and probably mediate the attachment of the 5S RNA into the large ribosomal subunit, where it forms part of the central protuberance. The protein is Large ribosomal subunit protein uL18 of Bifidobacterium adolescentis (strain ATCC 15703 / DSM 20083 / NCTC 11814 / E194a).